Here is a 451-residue protein sequence, read N- to C-terminus: Prenyltransferase anuH (451 aa).

The dimethylallyl diphosphate site is built by Arg-105, Lys-189, Tyr-191, Lys-257, Tyr-259, and Tyr-422.

It belongs to the tryptophan dimethylallyltransferase family.

The enzyme catalyses (8S)-annullatin E + dimethylallyl diphosphate = (8S)-annullatin J + diphosphate. It participates in secondary metabolite biosynthesis. Its function is as follows. Cytochrome P450 monooxygenase; part of the gene cluster that mediates the biosynthesis of annullatin D, an alkylated aromatic polyketide with a fused dihydrobenzofuran lactone ring system that exhibits potent agonistic activities toward the cannabinoid receptors. Within the pathway, anuH uses dimethylallyl diphosphate (DMAPP) to prenylate (8S)-annullatin E to produce (8S)-annullatin J. Geranyl and farnesyl diphosphate are not consumed by anuH for prenylation. 2-hydroxymethyl-3-pentylphenol, without the hydroxyl group at the side chain, is also accepted by anuH, but only with low conversion yield. The annullatin backbone 2-hydroxymethyl-3-pentylphenol is assembled from one acetyl-CoA starter unit and 5 malonyl-CoA elongation units by cooperation of the highly reducing polyketide synthase anuA, the short-chain dehydrogenase anuB and the oxidoreductase anuC, before being hydroxylated at the C-5 alkyl chain by the cytochrome P450 monooxygenase anuE to form (8S)-annullatin E. The prenyltransferase anuH subsequently installs one isoprenyl group at the benzene ring to form (8S)-annullatin J. Enzymatic or nonenzymatic dihydro-benzofuran ring formation between the prenyl and the phenolic hydroxyl groups in (8S)-annullatin J results in two diastereomers (2S,9S)-annullatin H and compound 12. The intermediate (2S,9S)-annullatin H is then converted to (2S,9S)-annullatin D by the FAD-linked oxidoreductase anuG-catalyzed five-member lactone ring formation. The isomer 12 acts as a substrate for the short-chain dehydrogenase anuF and is oxidized to (2R)-annullatin F, which is subsequently acetylated by an acetyltransferase leading to (2R)-annullatin G formation. The remaining enzymes identified within the cluster, anuD, anuI and anuJ, seem not to be involved in annullatin biosynthesis. This chain is Prenyltransferase anuH, found in Penicillium roqueforti (strain FM164).